A 1213-amino-acid polypeptide reads, in one-letter code: Filamin-A-interacting protein 1 (1213 aa).

A disordered region spans residues 1–70 (MRSRNQGGES…TSGECERKTK (70 aa)). Residues 61 to 70 (TSGECERKTK) are compositionally biased toward basic and acidic residues. At Ser-138 the chain carries Phosphoserine. Coiled coils occupy residues 192-591 (DYMN…ELSC) and 624-781 (PEDN…LSKR). 2 disordered regions span residues 878 to 900 (NGPS…PGEV) and 949 to 976 (KPRI…GPER). Polar residues-rich tracts occupy residues 880-894 (PSIT…NSSP) and 960-970 (VMPQKQKSGDT). Ser-979 bears the Phosphoserine mark. A disordered region spans residues 1103 to 1213 (VSTGTVLRSP…STTSLGGGKG (111 aa)). Residues 1125-1138 (VTSTITITPVTTSS) are compositionally biased toward low complexity. The span at 1139–1156 (ARGTQSVSGQDGSSQRPT) shows a compositional bias: polar residues. Positions 1168-1179 (AGKPVVAAPGAG) are enriched in low complexity.

This sequence belongs to the FILIP1 family. Interacts with FLNA. Interacts with RHOD (in GTP-bound form). In terms of tissue distribution, moderately expressed in adult heart and brain. Weakly expressed in lung, skeletal muscle, ovary, testis, kidney, and fetal brain, and hardly detectable in liver, pancreas, spleen, and fetal liver. Within brain, moderate expression is found in amygdala and caudate nucleus. Expressed in skin fibroblasts.

It is found in the cytoplasm. It localises to the cytoskeleton. Its function is as follows. By acting through a filamin-A/F-actin axis, it controls the start of neocortical cell migration from the ventricular zone. May be able to induce the degradation of filamin-A. This is Filamin-A-interacting protein 1 (FILIP1) from Homo sapiens (Human).